Consider the following 291-residue polypeptide: ATP synthase subunit a (291 aa).

6 helical membrane passes run 51 to 71 (FSFT…LLLV), 117 to 137 (FFPC…QGMI), 146 to 166 (HFLI…IVGF), 173 to 193 (FLSF…LVLL), 213 to 233 (MMAG…MLCM), and 239 to 259 (FIGD…ELGV).

The protein belongs to the ATPase A chain family. As to quaternary structure, F-type ATPases have 2 components, CF(1) - the catalytic core - and CF(0) - the membrane proton channel. CF(1) has five subunits: alpha(3), beta(3), gamma(1), delta(1), epsilon(1). CF(0) has three main subunits: a, b and c.

The protein localises to the mitochondrion inner membrane. Its function is as follows. Mitochondrial membrane ATP synthase (F(1)F(0) ATP synthase or Complex V) produces ATP from ADP in the presence of a proton gradient across the membrane which is generated by electron transport complexes of the respiratory chain. F-type ATPases consist of two structural domains, F(1) - containing the extramembraneous catalytic core and F(0) - containing the membrane proton channel, linked together by a central stalk and a peripheral stalk. During catalysis, ATP synthesis in the catalytic domain of F(1) is coupled via a rotary mechanism of the central stalk subunits to proton translocation. Key component of the proton channel; it may play a direct role in the translocation of protons across the membrane. This Vicia faba (Broad bean) protein is ATP synthase subunit a (ATP6).